A 231-amino-acid polypeptide reads, in one-letter code: Protein OPG061 (231 aa).

It belongs to the orthopoxvirus OPG058 family.

The protein localises to the host nucleus. Its subcellular location is the host nucleolus. The chain is Protein OPG061 (OPG061) from Vaccinia virus (strain Western Reserve) (VACV).